A 523-amino-acid chain; its full sequence is Arylsulfatase K (523 aa).

An N-terminal signal peptide occupies residues 1-16; it reads MLRVFVLLIFNVNAYC. Ca(2+) is bound by residues Asp-35 and Cys-75. Catalysis depends on Cys-75, which acts as the Nucleophile. Cys-75 is subject to 3-oxoalanine (Cys). An N-linked (GlcNAc...) asparagine glycan is attached at Asn-103. 2 residues coordinate substrate: Lys-123 and His-246. N-linked (GlcNAc...) asparagine glycosylation occurs at Asn-257. The Ca(2+) site is built by Asp-308 and His-309. The N-linked (GlcNAc...) asparagine glycan is linked to Asn-405.

This sequence belongs to the sulfatase family. Requires Ca(2+) as cofactor. In terms of processing, the conversion to 3-oxoalanine (also known as C-formylglycine, FGly), of a serine or cysteine residue in prokaryotes and of a cysteine residue in eukaryotes, is critical for catalytic activity.

It localises to the secreted. The protein resides in the lysosome. It carries out the reaction an aryl sulfate + H2O = a phenol + sulfate + H(+). It catalyses the reaction Hydrolysis of the 2-sulfate groups of the 2-O-sulfo-D-glucuronate residues of chondroitin sulfate, heparin and heparitin sulfate.. Catalyzes the hydrolysis of pseudosubstrates such as p-nitrocatechol sulfate and p-nitrophenyl sulfate. Catalyzes the hydrolysis of the 2-sulfate groups of the 2-O-sulfo-D-glucuronate residues of chondroitin sulfate, heparin and heparitin sulfate. Acts selectively on 2-sulfoglucuronate and lacks activity against 2-sulfoiduronate. This Danio rerio (Zebrafish) protein is Arylsulfatase K (arsk).